We begin with the raw amino-acid sequence, 551 residues long: Thermolysin (551 aa).

A signal peptide spans 1 to 31; sequence MKRKMKMKLVRFGLAAGLAAQVFFLPYNALA. Positions 32–235 are cleaved as a propeptide — activation peptide; that stretch reads STEHVTWNQQ…DAAKPGDVKS (204 aa). Ca(2+) is bound by residues Asp-292, Asp-294, Gln-296, and Asp-373. Zn(2+) is bound at residue His-377. Glu-378 is a catalytic residue. His-381 and Glu-401 together coordinate Zn(2+). Residues Glu-412, Asn-418, Asp-420, Glu-422, Glu-425, Thr-429, Ile-432, and Asp-435 each coordinate Ca(2+). Catalysis depends on His-466, which acts as the Proton donor.

Belongs to the peptidase M4 family. The cofactor is Ca(2+). It depends on Zn(2+) as a cofactor.

Its subcellular location is the secreted. The catalysed reaction is Preferential cleavage: Xaa-|-Leu &gt; Xaa-|-Phe.. Functionally, extracellular zinc metalloprotease. The chain is Thermolysin (nprS) from Geobacillus stearothermophilus (Bacillus stearothermophilus).